A 291-amino-acid polypeptide reads, in one-letter code: 3-hydroxy-5-phosphonooxypentane-2,4-dione thiolase (291 aa).

The Schiff-base intermediate with substrate role is filled by lysine 203.

This sequence belongs to the DeoC/FbaB aldolase family. In terms of assembly, homodecamer.

The protein localises to the cytoplasm. The enzyme catalyses dihydroxyacetone phosphate + acetyl-CoA = 3-hydroxy-2,4-dioxopentyl phosphate + CoA. Its function is as follows. Involved in the degradation of phospho-AI-2, thereby terminating induction of the lsr operon and closing the AI-2 signaling cycle. Catalyzes the transfer of an acetyl moiety from 3-hydroxy-5-phosphonooxypentane-2,4-dione to CoA to form glycerone phosphate and acetyl-CoA. This Yersinia enterocolitica serotype O:8 / biotype 1B (strain NCTC 13174 / 8081) protein is 3-hydroxy-5-phosphonooxypentane-2,4-dione thiolase.